Consider the following 218-residue polypeptide: DNA-binding protein HU 2 (218 aa).

The interval 1-91 is bacterial histone-like domain; that stretch reads MNKAQLVEAI…QGFKDLVSGS (91 aa). Residues 101 to 218 are disordered; the sequence is VKKAPKGSLS…TAKKATARKK (118 aa). The tract at residues 118-218 is degenerate repeats region; the sequence is KAAGKKAAAK…TAKKATARKK (101 aa). Residues 127 to 161 are compositionally biased toward low complexity; the sequence is KKATGAAKKTTGAAKKTSAAAKKTTAKKTTGAAKT. Residues 162–172 show a composition bias toward basic residues; it reads TAKKTTAKKSA. The span at 173–182 shows a compositional bias: low complexity; sequence AKTTTAAAKK. Over residues 183–218 the composition is skewed to basic residues; that stretch reads TAAKKAPAKKATAKKAPAKKSTARKTTAKKATARKK.

The protein belongs to the bacterial histone-like protein family. Long actinobacterial subfamily. In terms of assembly, homodimer.

It is found in the cytoplasm. The protein resides in the nucleoid. Its function is as follows. Histone-like DNA-binding protein which is capable of wrapping DNA to stabilize it, and thus to prevent its denaturation under extreme environmental conditions. The polypeptide is DNA-binding protein HU 2 (hup2) (Streptomyces coelicolor (strain ATCC BAA-471 / A3(2) / M145)).